A 954-amino-acid chain; its full sequence is E3 ubiquitin-protein ligase MIB2 (954 aa).

The MIB/HERC2 1 domain maps to 1-80 (MDLDPYASMQ…AYDLLLYDNA (80 aa)). The ZZ-type zinc-finger motif lies at 86 to 138 (HPNIICDCCKKHGIRGMRWKCKMCFDYDLCTQCYMNNKHDLSHAFERYETAHS). Zn(2+) is bound by residues Cys-91, Cys-94, Cys-106, Cys-109, Cys-115, Cys-118, His-124, and His-128. One can recognise an MIB/HERC2 2 domain in the interval 149 to 227 (LTRITLKGTF…KVDLKCTVEA (79 aa)). ANK repeat units follow at residues 464 to 493 (QGRTALQIASYQGHLDVVKILLQAHATVNL), 497 to 526 (EGDTALHYAAFGNQADVARVLMAKGAGADL), 530 to 559 (AKCTALYVAVSQGFTEVVQALCELNCDVNL), 563 to 591 (HGDTPLHYAITADYKVIIEILTEVPNIDF), 597 to 626 (QGFNLLHYSALKGNKLAIKKILARARQLVD), 631 to 661 (DGFTALHLAALNNHKEVAEILIKEGRCDVNV), 665 to 694 (RNQTPLHLAIIQGHVGLVQLLVSEGSDVNA), 698 to 726 (DGDTAMHIALERQQLMSVLMEKREGEMGS), and 766 to 795 (RGKSPLDLITDGRIVQIIKDFSQKFREQQV). RING-type zinc fingers lie at residues 830–865 (CLVCSELALLIHFFPCQHSIVCEECSRRMKKCIKCQ) and 910–943 (CPICIDDQIKLVFQCGHGSCPDCSTALTVCPICR).

Its subcellular location is the cytoplasm. It catalyses the reaction S-ubiquitinyl-[E2 ubiquitin-conjugating enzyme]-L-cysteine + [acceptor protein]-L-lysine = [E2 ubiquitin-conjugating enzyme]-L-cysteine + N(6)-ubiquitinyl-[acceptor protein]-L-lysine.. The protein operates within protein modification; protein ubiquitination. E3 ubiquitin-protein ligase that mediates ubiquitination of Delta receptors, which act as ligands of Notch proteins. Positively regulates the Delta-mediated Notch signaling by ubiquitinating the intracellular domain of Delta, leading to endocytosis of Delta receptors. The polypeptide is E3 ubiquitin-protein ligase MIB2 (MIB2) (Gallus gallus (Chicken)).